The following is a 1353-amino-acid chain: Protein prickle (1353 aa).

3 disordered regions span residues 130-206 (VDDG…TKRN), 266-292 (QEEEPPEPPKPALPPKQKQPRPVPPLP), and 500-540 (AKYS…SAHA). The span at 147 to 165 (TPTATATAGRPLFPLSSSP) shows a compositional bias: low complexity. Basic residues predominate over residues 166–178 (RRSKKLLRSLRAH). Residues 179–189 (VKGESRPEKPA) show a composition bias toward basic and acidic residues. Positions 514–532 (LSPALSTPSPPSLLHHPAA) are enriched in low complexity. Residues 548 to 656 (MDMQRQSHSD…NVRQLMSARP (109 aa)) form the PET domain. 3 consecutive LIM zinc-binding domains span residues 655-719 (RPCD…ETLK), 720-780 (PRCS…MFAE), and 781-843 (YCDY…GEPP). 3 disordered regions span residues 840 to 892 (GEPP…HQAS), 933 to 962 (HCRSGDHAGGGDFTDFSGGRASSTSHNMSP), and 1062 to 1303 (ADIM…SSSS). The segment covering 861–892 (TQRVRPQTRITSSHASSSPPMSPQQQQQHQAS) has biased composition (low complexity). Polar residues-rich tracts occupy residues 952–962 (RASSTSHNMSP) and 1111–1120 (SLNTPLSAHS). Residues 1130-1142 (SILSGASSSSPMS) show a composition bias toward low complexity. Positions 1177 to 1205 (GDKDRDRDRERDRDRDRDKGGDKDRESGR) are enriched in basic and acidic residues. 2 stretches are compositionally biased toward basic residues: residues 1207–1220 (GPGHSSRRRRRRKS) and 1228–1240 (NHHRSGSGHRSHS). Basic and acidic residues predominate over residues 1269–1284 (ETAHKSPRQQRERERE).

It belongs to the prickle / espinas / testin family. Interacts with dsh; PET and LIM domains interact with dsh DEP domain, in wing cells. Interacts with Vang in photoreceptor cells.

It is found in the cell membrane. Acts in a planar cell polarity (PCP) complex; polarization along the apical/basal axis of epithelial cells. PCP signaling in the wing disk requires the receptor fz and the cytoplasmic proteins dsh and pk. These act in a feedback loop leading to activation of the jnk cascade and subsequent polarized arrangement of hairs and bristles. Dgo and pk compete with one another for dsh binding, thereby modulating fz dsh activity and ensuring tight control over fz PCP signaling. Vang, stan and pk function together to regulate the establishment of tissue polarity in the adult eye. The sequence is that of Protein prickle from Drosophila pseudoobscura pseudoobscura (Fruit fly).